Reading from the N-terminus, the 949-residue chain is ATPase 6, plasma membrane-type (949 aa).

The Cytoplasmic segment spans residues 1–64; it reads MAADISWDEI…EKVENKFLKF (64 aa). Residues 65 to 84 form a helical membrane-spanning segment; that stretch reads LGFMWNPLSWVMEAAAIMAI. Over 85-96 the chain is Extracellular; it reads VLANGGGRPPDW. A helical transmembrane segment spans residues 97–117; the sequence is QDFVGITCLLIINSTISFIEE. Residues 118–246 are Cytoplasmic-facing; sequence NNAGNAAAAL…GHFQKVLTAI (129 aa). The helical transmembrane segment at 247-267 threads the bilayer; it reads GNFCICSIGIGMLIEIIIMYP. Residues 268 to 276 lie on the Extracellular side of the membrane; the sequence is IQHRKYRDG. Residues 277 to 294 traverse the membrane as a helical segment; sequence IDNLLVLLIGGIPIAMPT. The Cytoplasmic segment spans residues 295-645; the sequence is VLSVTMAIGS…TSRAIFQRMK (351 aa). The active-site 4-aspartylphosphate intermediate is the Asp332. Asp590 and Asp594 together coordinate Mg(2+). The chain crosses the membrane as a helical span at residues 646-667; sequence NYTIYAVSITIRIVLGFMLVAL. Residues 668 to 672 are Extracellular-facing; it reads IWEFD. Residues 673–695 traverse the membrane as a helical segment; it reads FSPFMVLIIAILNDGTIMTISKD. Residues 696–711 are Cytoplasmic-facing; it reads RVKPSPIPDSWKLKEI. The chain crosses the membrane as a helical span at residues 712–732; sequence FATGVVLGTYMALVTVVFFWL. Topologically, residues 733–753 are extracellular; sequence AHDTTFFSDKFGVRSLQGKDE. A helical transmembrane segment spans residues 754-774; sequence ELIAVLYLQVSIISQALIFVT. At 775-786 the chain is on the cytoplasmic side; sequence RSRSWSFVERPG. A helical transmembrane segment spans residues 787 to 807; that stretch reads LLLLIAFFVAQLIATLIATYA. Residues 808 to 815 are Extracellular-facing; sequence HWEFARIK. The helical transmembrane segment at 816 to 836 threads the bilayer; the sequence is GCGWGWCGVIWIYSIVTYIPL. Residues 837-949 lie on the Cytoplasmic side of the membrane; sequence DILKFITRYT…IDNLNQHYTV (113 aa). At Thr883 the chain carries Phosphothreonine. Ser931 is subject to Phosphoserine. Residues 947 to 949 form an interaction with 14-3-3 proteins region; sequence YTV. Thr948 bears the Phosphothreonine mark.

It belongs to the cation transport ATPase (P-type) (TC 3.A.3) family. Type IIIA subfamily. In terms of assembly, binds to 14-3-3 proteins. The binding is induced by phosphorylation of Thr-948. Binding to 14-3-3 proteins activates the H(+)-ATPase. Expressed in guard cells.

The protein localises to the membrane. It catalyses the reaction ATP + H2O + H(+)(in) = ADP + phosphate + 2 H(+)(out). Its function is as follows. The plasma membrane H(+) ATPase of plants and fungi generates a proton gradient that drives the active transport of nutrients by H(+)-symport. The resulting external acidification and/or internal alkinization may mediate growth responses. The sequence is that of ATPase 6, plasma membrane-type (AHA6) from Arabidopsis thaliana (Mouse-ear cress).